Here is a 313-residue protein sequence, read N- to C-terminus: MPKVKSGAIGRRRGRQEQRRELKSAGGLMFNTGIGQHILKNPLIINSIIDKAALRPTDVVLEVGPGTGNMTVKLLEKAKKVVACELDPRLVAELHKRVQGTPVASKLQVLVGDVLKTDLPFFDTCVANLPYQISSPFVFKLLLHRPFFRCAILMFQREFALRLVAKPGDKLYCRLSINTQLLARVDHLMKVGKNNFRPPPKVESSVVRIEPKNPPPPINFQEWDGLVRITFVRKNKTLSAAFKSSAVQQLLEKNYRIHCSVHNIIIPEDFSIADKIQQILTSTGFSDKRARSMDIDDFIRLLHGFNAEGIHFS.

Residues 1 to 21 (MPKVKSGAIGRRRGRQEQRRE) are disordered. Residues histidine 37, leucine 39, glycine 64, glutamate 85, aspartate 113, and asparagine 128 each coordinate S-adenosyl-L-methionine.

It belongs to the class I-like SAM-binding methyltransferase superfamily. rRNA adenine N(6)-methyltransferase family. Part of the small subunit (SSU) processome, composed of more than 70 proteins and the RNA chaperone small nucleolar RNA (snoRNA) U3.

Its subcellular location is the nucleus. The protein resides in the nucleoplasm. It is found in the nucleolus. The enzyme catalyses adenosine(1779)/adenosine(1780) in 18S rRNA + 4 S-adenosyl-L-methionine = N(6)-dimethyladenosine(1779)/N(6)-dimethyladenosine(1780) in 18S rRNA + 4 S-adenosyl-L-homocysteine + 4 H(+). Specifically dimethylates two adjacent adenosines in the loop of a conserved hairpin near the 3'-end of 18S rRNA in the 40S particle. Involved in the pre-rRNA processing steps leading to small-subunit rRNA production independently of its RNA-modifying catalytic activity. Part of the small subunit (SSU) processome, first precursor of the small eukaryotic ribosomal subunit. During the assembly of the SSU processome in the nucleolus, many ribosome biogenesis factors, an RNA chaperone and ribosomal proteins associate with the nascent pre-rRNA and work in concert to generate RNA folding, modifications, rearrangements and cleavage as well as targeted degradation of pre-ribosomal RNA by the RNA exosome. The chain is Dimethyladenosine transferase from Homo sapiens (Human).